Here is a 394-residue protein sequence, read N- to C-terminus: Actin-related protein 2 (394 aa).

M1 is modified (N-acetylmethionine). Residues 160–162 and 214–218 each bind ATP; these read GDG and RMIKE. K299 carries the N6-acetyllysine modification. 305-310 is a binding site for ATP; it reads GGSTMY. K322 bears the N6-acetyllysine mark.

It belongs to the actin family. ARP2 subfamily. As to quaternary structure, component of the Arp2/3 complex composed of ACTR2/ARP2, ACTR3/ARP3, ARPC1B/p41-ARC, ARPC2/p34-ARC, ARPC3/p21-ARC, ARPC4/p20-ARC and ARPC5/p16-ARC. Interacts with AVIL.

It is found in the cytoplasm. Its subcellular location is the cytoskeleton. The protein resides in the cell projection. It localises to the nucleus. Functionally, ATP-binding component of the Arp2/3 complex, a multiprotein complex that mediates actin polymerization upon stimulation by nucleation-promoting factor (NPF). The Arp2/3 complex mediates the formation of branched actin networks in the cytoplasm, providing the force for cell motility. Seems to contact the pointed end of the daughter actin filament. In podocytes, required for the formation of lamellipodia downstream of AVIL and PLCE1 regulation. In addition to its role in the cytoplasmic cytoskeleton, the Arp2/3 complex also promotes actin polymerization in the nucleus, thereby regulating gene transcription and repair of damaged DNA. The Arp2/3 complex promotes homologous recombination (HR) repair in response to DNA damage by promoting nuclear actin polymerization, leading to drive motility of double-strand breaks (DSBs). The chain is Actin-related protein 2 (ACTR2) from Bos taurus (Bovine).